The following is a 921-amino-acid chain: Isoleucine--tRNA ligase 1 (921 aa).

The short motif at 57-67 is the 'HIGH' region element; the sequence is PYANGDIHMGH. Glu-552 is an L-isoleucyl-5'-AMP binding site. The 'KMSKS' region motif lies at 593–597; the sequence is KMSKS. Lys-596 contacts ATP. Cys-888, Cys-891, Cys-908, and Cys-911 together coordinate Zn(2+).

This sequence belongs to the class-I aminoacyl-tRNA synthetase family. IleS type 1 subfamily. Monomer. Zn(2+) is required as a cofactor.

It localises to the cytoplasm. The enzyme catalyses tRNA(Ile) + L-isoleucine + ATP = L-isoleucyl-tRNA(Ile) + AMP + diphosphate. In terms of biological role, catalyzes the attachment of isoleucine to tRNA(Ile). As IleRS can inadvertently accommodate and process structurally similar amino acids such as valine, to avoid such errors it has two additional distinct tRNA(Ile)-dependent editing activities. One activity is designated as 'pretransfer' editing and involves the hydrolysis of activated Val-AMP. The other activity is designated 'posttransfer' editing and involves deacylation of mischarged Val-tRNA(Ile). This Bacillus cereus (strain ZK / E33L) protein is Isoleucine--tRNA ligase 1.